Reading from the N-terminus, the 453-residue chain is Probable acetylornithine aminotransferase, mitochondrial (453 aa).

At Lys302 the chain carries N6-(pyridoxal phosphate)lysine.

It belongs to the class-III pyridoxal-phosphate-dependent aminotransferase family. Requires pyridoxal 5'-phosphate as cofactor.

It is found in the mitochondrion matrix. The enzyme catalyses N(2)-acetyl-L-ornithine + 2-oxoglutarate = N-acetyl-L-glutamate 5-semialdehyde + L-glutamate. It participates in amino-acid biosynthesis; L-arginine biosynthesis; N(2)-acetyl-L-ornithine from L-glutamate: step 4/4. This is Probable acetylornithine aminotransferase, mitochondrial (argD) from Dictyostelium discoideum (Social amoeba).